The primary structure comprises 211 residues: Small ribosomal subunit protein uS3 (211 aa).

In terms of domain architecture, KH type-2 spans 38–106 (LRKFIKKAFY…NIELNIIEVK (69 aa)).

Belongs to the universal ribosomal protein uS3 family. In terms of assembly, part of the 30S ribosomal subunit. Forms a tight complex with proteins S10 and S14.

Binds the lower part of the 30S subunit head. Binds mRNA in the 70S ribosome, positioning it for translation. The protein is Small ribosomal subunit protein uS3 of Ehrlichia chaffeensis (strain ATCC CRL-10679 / Arkansas).